We begin with the raw amino-acid sequence, 890 residues long: Alanine--tRNA ligase (890 aa).

Zn(2+) contacts are provided by histidine 569, histidine 573, cysteine 671, and histidine 675.

The protein belongs to the class-II aminoacyl-tRNA synthetase family. The cofactor is Zn(2+).

The protein localises to the cytoplasm. The enzyme catalyses tRNA(Ala) + L-alanine + ATP = L-alanyl-tRNA(Ala) + AMP + diphosphate. Its function is as follows. Catalyzes the attachment of alanine to tRNA(Ala) in a two-step reaction: alanine is first activated by ATP to form Ala-AMP and then transferred to the acceptor end of tRNA(Ala). Also edits incorrectly charged Ser-tRNA(Ala) and Gly-tRNA(Ala) via its editing domain. The protein is Alanine--tRNA ligase of Synechococcus sp. (strain CC9902).